We begin with the raw amino-acid sequence, 782 residues long: DnaJ homolog subfamily C member 16 (782 aa).

The N-terminal stretch at methionine 1–alanine 25 is a signal peptide. At leucine 26 to glutamate 535 the chain is on the cytoplasmic side. The 65-residue stretch at aspartate 29–glycine 93 folds into the J domain. Residues phenylalanine 119 to proline 247 form the Thioredoxin domain. The helical; Anchor for type IV membrane protein transmembrane segment at methionine 536–valine 556 threads the bilayer. Over glutamine 557–aspartate 782 the chain is Extracellular. The disordered stretch occupies residues serine 562–serine 593. Residues asparagine 563–lysine 582 show a composition bias toward basic and acidic residues. The span at threonine 583–serine 593 shows a compositional bias: polar residues. Asparagine 631 is a glycosylation site (N-linked (GlcNAc...) asparagine).

It is found in the endoplasmic reticulum membrane. Its function is as follows. Plays an important role in regulating the size of autophagosomes during the formation process. This Homo sapiens (Human) protein is DnaJ homolog subfamily C member 16 (DNAJC16).